A 656-amino-acid polypeptide reads, in one-letter code: Histidine decarboxylase (656 aa).

Positions 84 and 197 each coordinate substrate. Lysine 308 carries the post-translational modification N6-(pyridoxal phosphate)lysine. A phosphoserine; by PKA mark is found at serine 343 and serine 362. Residues 481–502 (HCTSQPSPRAKNLIPPPVTRDS) are disordered.

The protein belongs to the group II decarboxylase family. In terms of assembly, homodimer. The cofactor is pyridoxal 5'-phosphate. May be post-translationally processed. Brain, glandular regions of the stomach, mast cells and fetal liver.

The catalysed reaction is L-histidine + H(+) = histamine + CO2. It participates in amine and polyamine biosynthesis; histamine biosynthesis; histamine from L-histidine: step 1/1. Phosphorylation of brain HDC by cAMP-dependent protein kinase leads to enzyme inactivation. Functionally, catalyzes the biosynthesis of histamine from histidine. This is Histidine decarboxylase (Hdc) from Rattus norvegicus (Rat).